We begin with the raw amino-acid sequence, 837 residues long: MSFVIAAPEVIAAAATDLASLESSIAAANAAAAANTTALLAAGADEVSTAVAALFGAHGQAYQALSAQAQAFHAQFVQALTSGGGAYAAAEAAATSPLLAPINEFFLANTGRPLIGNGTNGAPGTGANGGDGGWLIGNGGAGGSGAAGVNGGAGGNGGAGGLIGNGGAGGAGGRASTGTGGAGGAGGAAGMLFGAAGVGGPGGFAAAFGATGGAGGAGGNGGLFADGGVGGAGGATDAGTGGAGGSGGNGGLFGAGGTGGPGGFGIFGGGAGGDGGSGGLFGAGGTGGSGGTSIINVGGNGGAGGDAGMLSLGAAGGAGGSGGSNPDGGGGAGGIGGDGGTLFGSGGAGGVCGLGFDAGGAGGAGGKAGLLIGAGGAGGAGGGSFAGAGGTGGAGGAPGLVGNAGNGGNGGASANGAGAAGGAGGSGVLIGNGGNGGSGGTGAPAGTAGAGGLGGQLLGRDGFNAPASTPLHTLQQQILNAINEPTQALTGRPLIGNGANGTPGTGADGGAGGWLFGNGGNGGHGATGADGGDGGSGGAGGILSGIGGTGGSGGIGTTGQGGTGGTGGAALLIGSGGTGGSGGFGLDTGGAGGRGGDAGLFLGAAGTGGQAALSQNFIGAGGTAGAGGTGGLFANGGAGGAGGFGANGGTGGNGLLFGAGGTGGAGTLGADGGAGGHGGLFGAGGTGGAGGSSGGTFGGNGGSGGNAGLLALGASGGAGGSGGSALNVGGTGGVGGNGGSGGSLFGFGGAGGTGGSSGIGSSGGTGGDGGTAGVFGNGGDGGAGGFGADTGGNSSSVPNAVLIGNGGNGGNGGKAGGTPGAGGTSGLIIGENGLNGL.

The region spanning 4–94 is the PE domain; it reads VIAAPEVIAA…GAYAAAEAAA (91 aa). Residues 811–825 are compositionally biased toward gly residues; it reads NGGKAGGTPGAGGTS. The interval 811–837 is disordered; the sequence is NGGKAGGTPGAGGTSGLIIGENGLNGL. Over residues 826 to 837 the composition is skewed to low complexity; it reads GLIIGENGLNGL.

The protein belongs to the mycobacterial PE family. PGRS subfamily.

The polypeptide is PE-PGRS family protein PE_PGRS4 (Mycobacterium tuberculosis (strain ATCC 25618 / H37Rv)).